The chain runs to 371 residues: LIM domain-binding protein 2 (371 aa).

2 disordered regions span residues 244–289 (APPA…AAAN) and 325–371 (QYDA…QASQ). Over residues 263-289 (STSSTSNSSAGNNANSTNSKKKSAAAN) the composition is skewed to low complexity. The 40-residue stretch at 296–335 (DVMVVGEPTLMGGEFGDEDERLITRLENTQYDAANGMDDE) folds into the LIM interaction domain (LID) domain. Over residues 339–371 (NNSPALGNNSPWNSKPPANQETKSENPTPQASQ) the composition is skewed to polar residues.

It belongs to the LDB family. In terms of tissue distribution, first expressed at stages 15-16 in presumptive limb mesoderm. As limb outgrowth proceeds, expressed in the entire limb bud, concentrating in the distal mesoderm throughout limb development. Both hindlimbs and forelimbs exhibit similar expression patterns.

It localises to the nucleus. Its function is as follows. Binds to the LIM domain of a wide variety of LIM domain-containing transcription factors. In Gallus gallus (Chicken), this protein is LIM domain-binding protein 2 (LDB2).